Consider the following 157-residue polypeptide: ATP synthase subunit b (157 aa).

The helical transmembrane segment at Leu7–Pro27 threads the bilayer.

The protein belongs to the ATPase B chain family. F-type ATPases have 2 components, F(1) - the catalytic core - and F(0) - the membrane proton channel. F(1) has five subunits: alpha(3), beta(3), gamma(1), delta(1), epsilon(1). F(0) has three main subunits: a(1), b(2) and c(10-14). The alpha and beta chains form an alternating ring which encloses part of the gamma chain. F(1) is attached to F(0) by a central stalk formed by the gamma and epsilon chains, while a peripheral stalk is formed by the delta and b chains.

It is found in the cell inner membrane. In terms of biological role, f(1)F(0) ATP synthase produces ATP from ADP in the presence of a proton or sodium gradient. F-type ATPases consist of two structural domains, F(1) containing the extramembraneous catalytic core and F(0) containing the membrane proton channel, linked together by a central stalk and a peripheral stalk. During catalysis, ATP synthesis in the catalytic domain of F(1) is coupled via a rotary mechanism of the central stalk subunits to proton translocation. Component of the F(0) channel, it forms part of the peripheral stalk, linking F(1) to F(0). The sequence is that of ATP synthase subunit b from Azoarcus sp. (strain BH72).